We begin with the raw amino-acid sequence, 572 residues long: MKASQFLFATLKETPSDADIASSQLMVRAGLIRKIASGLYIWLPMGLRVLQKVERIVREEMQNIGAQEVLMPMTQPAELWQMTGRFNDYGPELLRFKDRHDRDFVLGPTHEEVITNLAQGELRSYKQLPITFFQIQNKFRDEIRPRFGVMRAREFTMKDAYSFHVDQASLAKTYDDMYDAYTRIFTRLGLDFRAVQADTGSIGGFASHEFHVLADSGEDDIAFSDSSEYAANVELAESVCTAERQPATMARENVDTVNMPTCEAVAEYLNVELATTVKTLIVQGHTPEGEPQLIAVVLRGDHTLNTIKAEKIEEANVPLTMATEEELKAAGLHKGYIGVELDMPVFVDRAAAALSDFVSGANEVNKHTIGMNWERDANITRIVDIRNVNQGDPSPDGKGTLQIKRGIEVGHIFQLGNKYSQAMNCTVSGDDGKPVTLMMGCYGIGVSRIIAAAIEQNNDENGIMWPLTPNISDSLAPFEVAIVPMKSKEETVMQTATALYDELKALGVNVLLDDRNERPGVKFADLELIGIPHRIVVSDRNLAEDKYEYINRRDTEKQLLSRDEVLAKVSSK.

The protein belongs to the class-II aminoacyl-tRNA synthetase family. ProS type 1 subfamily. In terms of assembly, homodimer.

It is found in the cytoplasm. It carries out the reaction tRNA(Pro) + L-proline + ATP = L-prolyl-tRNA(Pro) + AMP + diphosphate. Functionally, catalyzes the attachment of proline to tRNA(Pro) in a two-step reaction: proline is first activated by ATP to form Pro-AMP and then transferred to the acceptor end of tRNA(Pro). As ProRS can inadvertently accommodate and process non-cognate amino acids such as alanine and cysteine, to avoid such errors it has two additional distinct editing activities against alanine. One activity is designated as 'pretransfer' editing and involves the tRNA(Pro)-independent hydrolysis of activated Ala-AMP. The other activity is designated 'posttransfer' editing and involves deacylation of mischarged Ala-tRNA(Pro). The misacylated Cys-tRNA(Pro) is not edited by ProRS. The polypeptide is Proline--tRNA ligase (Psychrobacter arcticus (strain DSM 17307 / VKM B-2377 / 273-4)).